The sequence spans 502 residues: ATP synthase subunit alpha (502 aa).

169-176 lines the ATP pocket; that stretch reads GDRQTGKT.

The protein belongs to the ATPase alpha/beta chains family. As to quaternary structure, F-type ATPases have 2 components, CF(1) - the catalytic core - and CF(0) - the membrane proton channel. CF(1) has five subunits: alpha(3), beta(3), gamma(1), delta(1), epsilon(1). CF(0) has three main subunits: a(1), b(2) and c(9-12). The alpha and beta chains form an alternating ring which encloses part of the gamma chain. CF(1) is attached to CF(0) by a central stalk formed by the gamma and epsilon chains, while a peripheral stalk is formed by the delta and b chains.

It is found in the cell membrane. The enzyme catalyses ATP + H2O + 4 H(+)(in) = ADP + phosphate + 5 H(+)(out). Functionally, produces ATP from ADP in the presence of a proton gradient across the membrane. The alpha chain is a regulatory subunit. The protein is ATP synthase subunit alpha of Bacillus pumilus (strain SAFR-032).